The primary structure comprises 155 residues: Ribosome maturation factor RimP (155 aa).

Belongs to the RimP family.

The protein localises to the cytoplasm. In terms of biological role, required for maturation of 30S ribosomal subunits. This is Ribosome maturation factor RimP from Listeria innocua serovar 6a (strain ATCC BAA-680 / CLIP 11262).